Reading from the N-terminus, the 112-residue chain is Integration host factor subunit alpha (112 aa).

The protein belongs to the bacterial histone-like protein family. In terms of assembly, heterodimer of an alpha and a beta chain.

Its function is as follows. This protein is one of the two subunits of integration host factor, a specific DNA-binding protein that functions in genetic recombination as well as in transcriptional and translational control. This chain is Integration host factor subunit alpha, found in Rhizobium johnstonii (strain DSM 114642 / LMG 32736 / 3841) (Rhizobium leguminosarum bv. viciae).